Here is a 534-residue protein sequence, read N- to C-terminus: C-type lectin domain family 18 member A (534 aa).

Positions 47-88 are disordered; sequence GALPVAGKPEPMARSLASAPVSPWHHMDRGSTTPAKARSHSA. The SCP domain occupies 139 to 270; that stretch reads LTAHNRLRSR…EAMEAFVCAY (132 aa). In terms of domain architecture, EGF-like spans 316–349; that stretch reads PRNPCRMSCRNLGHLNISTCRCHCQPGYTGRYCQ. Disulfide bonds link Cys-324–Cys-337, Cys-339–Cys-348, Cys-415–Cys-520, and Cys-496–Cys-512. The C-type lectin domain occupies 394-521; the sequence is IDGDCFMVSP…CKTRNRYICQ (128 aa).

Its subcellular location is the secreted. The protein is C-type lectin domain family 18 member A (Clec18a) of Mus musculus (Mouse).